Reading from the N-terminus, the 1348-residue chain is Adhesion G protein-coupled receptor F5 (1348 aa).

Residues 1–21 (MRSPRTFTFYFLLLVICSSEA) form the signal peptide. Topologically, residues 22–1019 (ALSTPTEPIV…LKILLDIISY (998 aa)) are extracellular. The 109-residue stretch at 163-271 (PEAFITLKLK…NSFQGTPSNE (109 aa)) folds into the SEA domain. Ig-like domains lie at 268–366 (PSNE…LDVT), 367–464 (PIRI…IAVT), and 469–559 (ANLT…KDVT). Residues Asn270, Asn286, Asn337, and Asn349 are each glycosylated (N-linked (GlcNAc...) asparagine). Residues Cys291 and Cys348 are joined by a disulfide bond. Cysteines 389 and 447 form a disulfide. 3 N-linked (GlcNAc...) asparagine glycosylation sites follow: Asn470, Asn538, and Asn665. Cys490 and Cys543 are joined by a disulfide. The residue at position 818 (Ser818) is a Phosphoserine. The GAIN-B domain occupies 841–1005 (TPPFLAHPNV…SILMSPDSPD (165 aa)). Intrachain disulfides connect Cys953–Cys987 and Cys972–Cys989. The interval 953–1005 (CVFWNFSLANNTGGWDSSGCSVEDDGRDNRDRVFCKCNHLTSFSILMSPDSPD) is GPS. A tethered agonist region spans residues 993–1008 (TSFSILMSPDSPDPGS). A helical membrane pass occupies residues 1020-1040 (IGLGFSIVSLAACLVVEAMVW). Over 1041–1055 (KSVTKNRTSYMRHIC) the chain is Cytoplasmic. A helical membrane pass occupies residues 1056 to 1076 (IVNIAFCLLIADIWFIVAGAI). At 1077–1092 (HDGRYPLNETACVAAT) the chain is on the extracellular side. The chain crosses the membrane as a helical span at residues 1093-1113 (FFIHFFYLSVFFWMLTLGLML). Over 1114–1130 (FYRLIFILHDASKSTQK) the chain is Cytoplasmic. Residues 1131–1151 (AIAFSLGYGCPLIISSITVGV) form a helical membrane-spanning segment. At 1152 to 1175 (TQPQEVYMRKNACWLNWEDTRALL) the chain is on the extracellular side. A helical transmembrane segment spans residues 1176-1196 (AFAIPALIIVVVNVSITVVVI). Residues 1197 to 1221 (TKILRPSIGDKPGKQEKSSLFQISK) are Cytoplasmic-facing. Residues 1222 to 1242 (SIGVLTPLLGLTWGFGLATVI) traverse the membrane as a helical segment. Residues 1243–1250 (QGSNAVFH) lie on the Extracellular side of the membrane. A helical transmembrane segment spans residues 1251–1271 (IIFTLLNAFQGLFILLFGCLW). At 1272–1348 (DQKVQEALLH…NSSSAYSLLN (77 aa)) the chain is on the cytoplasmic side. At Thr1302 the chain carries Phosphothreonine. Ser1309 bears the Phosphoserine mark. The disordered stretch occupies residues 1328-1348 (STPETTSSSLENSSSAYSLLN).

This sequence belongs to the G-protein coupled receptor 2 family. Adhesion G-protein coupled receptor (ADGR) subfamily. As to quaternary structure, homodimer; disulfide-linked. Heterodimer of 2 chains generated by proteolytic processing; the large extracellular N-terminal fragment and the membrane-bound C-terminal fragment predominantly remain associated and non-covalently linked. Fragment generates by the processing enzyme furin remains attached to the extracellular N-terminal fragment. Interacts (via N-terminal extracellular domain) with SFTPD. Post-translationally, highly glycosylated. Proteolytically cleaved at multiple sites: one in the GPS region of the GAIN-B domain (S1 site) and the other in the SEA domain (S2 site). The proteolytic cleavage at S1 site generates an extracellular subunit and a seven-transmembrane subunit. The proteolytic cleavage at S2 site generates a fragment that undergoes proteolytic cleavage by the processing enzyme furin. In terms of tissue distribution, widely expressed, with highest levels in lung, pancreas, kidney and heart. In the kidney, expressed more abundantly in the medulla than in the cortex, predominantly expressed in A-intercalated cells (at protein level). Expressed in endothelial cells from various tissues, including brain, heart, kidney, liver, lung and muscle. In the lung, expressed in alveolar type II (ATII) cells (at protein level). Expressed in pancreatic islets of Langerhans, predominantly in delta cells, as well as in endothelial cells. Expressed in white adipose tissue.

The protein localises to the cell membrane. Its activity is regulated as follows. As an adhesion G protein-coupled receptor (aGPCR) exhibits a large N-terminal extracellular domain containing highly conserved GPCR autoproteolysis-inducing (GAIN) domain. During synthesis, intracellular autoproteolytic processing of nascent chain within the GAIN domain generates a mature protein, consisting of an N-terminal fragment that is non-covalently linked to the C-terminal fragment. The mature protein is routed to the plasma membrane where the N- and C-terminal fragments remain associated, forming the holoreceptor. Dissociation of the aGPCR fragments stimulates G protein signaling through the action of the tethered-peptide agonist stalk that is occluded within the GAIN domain in the holoreceptor form. This dissociation might be induced by ligand binding, such as that of sFNDC4. Its function is as follows. Adhesion G protein-coupled receptor. In alveolar type II (ATII or AT2) cells, required for normal lung surfactant homeostasis. Modulation of both surfactant secretion and uptake by ATII cells is mediated by the downstream activation of GNAQ/GNA11 proteins and may be a consequence of increased cortical F-actin assembly induced by ADGRF5 activation. In the kidney, may play a role in the regulation of acid excretion into the primary urine, possibly by regulating the surface expression of V-ATPase proton pump. As a receptor for soluble FNDC4 (sFNDC4), required for proper systemic glucose tolerance, specifically sensitizing white adipose tissue to insulin. Also plays a role in sFNDC4-induced decrease of local inflammation in white adipose tissue. The chain is Adhesion G protein-coupled receptor F5 (Adgrf5) from Mus musculus (Mouse).